A 156-amino-acid chain; its full sequence is 6,7-dimethyl-8-ribityllumazine synthase (156 aa).

5-amino-6-(D-ribitylamino)uracil-binding positions include Phe22, 57–59, and 81–83; these read AYE and SVI. Residue 86–87 participates in (2S)-2-hydroxy-3-oxobutyl phosphate binding; it reads GT. His89 acts as the Proton donor in catalysis. Residue Phe114 participates in 5-amino-6-(D-ribitylamino)uracil binding. Arg128 serves as a coordination point for (2S)-2-hydroxy-3-oxobutyl phosphate.

Belongs to the DMRL synthase family. As to quaternary structure, forms an icosahedral capsid composed of 60 subunits, arranged as a dodecamer of pentamers.

The catalysed reaction is (2S)-2-hydroxy-3-oxobutyl phosphate + 5-amino-6-(D-ribitylamino)uracil = 6,7-dimethyl-8-(1-D-ribityl)lumazine + phosphate + 2 H2O + H(+). The protein operates within cofactor biosynthesis; riboflavin biosynthesis; riboflavin from 2-hydroxy-3-oxobutyl phosphate and 5-amino-6-(D-ribitylamino)uracil: step 1/2. Catalyzes the formation of 6,7-dimethyl-8-ribityllumazine by condensation of 5-amino-6-(D-ribitylamino)uracil with 3,4-dihydroxy-2-butanone 4-phosphate. This is the penultimate step in the biosynthesis of riboflavin. The chain is 6,7-dimethyl-8-ribityllumazine synthase from Photobacterium leiognathi.